The following is a 451-amino-acid chain: uncharacterized protein (451 aa).

The disordered stretch occupies residues 415-435 (AHGDTEWLPPPHLDHGQPRVN).

Belongs to the Rv1128c/1148c/1588c/1702c/1945/3466 family.

This is an uncharacterized protein from Mycobacterium tuberculosis (strain ATCC 25618 / H37Rv).